An 822-amino-acid polypeptide reads, in one-letter code: Putative pentatricopeptide repeat-containing protein At5g13230, mitochondrial (822 aa).

The transit peptide at 1–70 directs the protein to the mitochondrion; that stretch reads MIVFMRIIHV…QKNDPISAKA (70 aa). PPR repeat units follow at residues 48–82, 83–117, 145–179, 180–210, 211–245, 246–280, 281–311, 312–346, 347–381, 382–416, 417–447, 448–482, 483–513, 514–548, 549–584, and 585–619; these read DSHA…GSCL, DLFA…NNVS, NPHV…GYDS, NAFV…ILCK, DIVV…GFMP, NNYT…CYVL, DPRV…MPKN, DVVP…FVVP, NEFT…GFDL, DIYV…NEVS, WNTV…QVSV, TEVT…NNAK, KVAV…METI, DVAS…DCKP, NGLT…GIEP, and CLEH…PSVM. The type E motif stretch occupies residues 620–695; it reads IWRAMLSASM…EPGLSWIEHQ (76 aa). A type E(+) motif region spans residues 696 to 726; that stretch reads GDVHYFSVGLSDHPDMKLINGMLEWLNMKAT. The type DYW motif stretch occupies residues 727–822; it reads RAGYVPDRNA…AGVCSCGDHW (96 aa).

The protein belongs to the PPR family. PCMP-H subfamily.

The protein localises to the mitochondrion. The protein is Putative pentatricopeptide repeat-containing protein At5g13230, mitochondrial (PCMP-H89) of Arabidopsis thaliana (Mouse-ear cress).